Reading from the N-terminus, the 373-residue chain is MSENKVNLLDFDRNALRAFFADELGEKAFRADQIMKWIYHFGCDDFSQMTNVNKALREKLARIAEIRAPEISTEQRSSDGTIKWAMRVGDQEVETVYIPEADRATLCVSSQVGCALECKFCSTGQQGFNRNLTVSEIIGQVWRAAQVVGFPKDTGKRVITNVVMMGMGEPLLNLSNLVPALSLMMEDFGFGLSKRRVTVSTSGVVPALDKLGDMIDVALAISLHAPNDKLRSEIMPINDKYNIQEFLGSVQRYLSKSNANHGRVTVEYVLLDHVNDDMEHARELAELLKDTPSKINLIPFNPFPSNPYGKPSNSRVDRFSKVLMEYGYTVIVRKTRGDDIDAACGQLVGDVIDRTKRTMKKRMQEQEISVKML.

The active-site Proton acceptor is the Glu-94. The Radical SAM core domain occupies 100–339 (EADRATLCVS…VIVRKTRGDD (240 aa)). The cysteines at positions 107 and 344 are disulfide-linked. [4Fe-4S] cluster contacts are provided by Cys-114, Cys-118, and Cys-121. S-adenosyl-L-methionine-binding positions include 168–169 (GE), Ser-200, 222–224 (SLH), and Asn-301. Residue Cys-344 is the S-methylcysteine intermediate of the active site.

This sequence belongs to the radical SAM superfamily. RlmN family. [4Fe-4S] cluster is required as a cofactor.

The protein localises to the cytoplasm. It carries out the reaction adenosine(2503) in 23S rRNA + 2 reduced [2Fe-2S]-[ferredoxin] + 2 S-adenosyl-L-methionine = 2-methyladenosine(2503) in 23S rRNA + 5'-deoxyadenosine + L-methionine + 2 oxidized [2Fe-2S]-[ferredoxin] + S-adenosyl-L-homocysteine. The enzyme catalyses adenosine(37) in tRNA + 2 reduced [2Fe-2S]-[ferredoxin] + 2 S-adenosyl-L-methionine = 2-methyladenosine(37) in tRNA + 5'-deoxyadenosine + L-methionine + 2 oxidized [2Fe-2S]-[ferredoxin] + S-adenosyl-L-homocysteine. Its function is as follows. Specifically methylates position 2 of adenine 2503 in 23S rRNA and position 2 of adenine 37 in tRNAs. m2A2503 modification seems to play a crucial role in the proofreading step occurring at the peptidyl transferase center and thus would serve to optimize ribosomal fidelity. In Tolumonas auensis (strain DSM 9187 / NBRC 110442 / TA 4), this protein is Dual-specificity RNA methyltransferase RlmN.